Reading from the N-terminus, the 129-residue chain is Short-chain dehydrogenase/reductase homolog YusR (129 aa).

It belongs to the short-chain dehydrogenases/reductases (SDR) family.

The chain is Short-chain dehydrogenase/reductase homolog YusR (yusR) from Bacillus subtilis (strain 168).